The sequence spans 142 residues: Coactosin-like protein (142 aa).

A2 carries the N-acetylalanine modification. Residues 2-130 (ATKIDKEACR…EEDFIRSELK (129 aa)) enclose the ADF-H domain. Positions 66 to 75 (TGDAMSKRSK) are flexible and important for F-actin binding. The residue at position 102 (K102) is an N6-acetyllysine. S141 carries the post-translational modification Phosphoserine.

It belongs to the actin-binding proteins ADF family. Coactosin subfamily. In terms of assembly, interacts with 5-lipoxygenase (ALOX5/5LO) in a calcium-independent manner. Binds to F-actin with a stoichiometry of 1:2.

It localises to the cytoplasm. It is found in the cytoskeleton. The protein resides in the nucleus. Functionally, binds to F-actin in a calcium-independent manner. Has no direct effect on actin depolymerization. Acts as a chaperone for ALOX5 (5LO), influencing both its stability and activity in leukotrienes synthesis. The polypeptide is Coactosin-like protein (Cotl1) (Mus musculus (Mouse)).